A 394-amino-acid polypeptide reads, in one-letter code: Outer membrane protein S1 (394 aa).

The first 21 residues, 1–21, serve as a signal peptide directing secretion; that stretch reads MNRKVLALLVPALLVAGAANA. The segment at 222-242 is disordered; it reads SSSDRSDNQVARGYGDGMNER.

This sequence belongs to the Gram-negative porin family. As to quaternary structure, homotrimer.

It localises to the cell outer membrane. In terms of biological role, forms pores that allow passive diffusion of small molecules across the outer membrane. The sequence is that of Outer membrane protein S1 (ompS1) from Salmonella typhi.